Consider the following 122-residue polypeptide: Large ribosomal subunit protein uL14 (122 aa).

It belongs to the universal ribosomal protein uL14 family. In terms of assembly, part of the 50S ribosomal subunit. Forms a cluster with proteins L3 and L19. In the 70S ribosome, L14 and L19 interact and together make contacts with the 16S rRNA in bridges B5 and B8.

Binds to 23S rRNA. Forms part of two intersubunit bridges in the 70S ribosome. The polypeptide is Large ribosomal subunit protein uL14 (Chlorobium phaeobacteroides (strain DSM 266 / SMG 266 / 2430)).